The following is a 190-amino-acid chain: MSKYMGGKEASSVLGVHQRTLYQWDKKGWIKTIRTKGGKRLYDVGSYLADKDEESKEDHKLSICYVRVSSNNQKDDLERQIKFMKKKYPNHTIIKDISSGINMNRKGLNKIIDLAIEGRVKEVVVAYKDRLARFGFSLIERLIEKYSDGKIVVVRKKENQEPQEELMEDMMDVMNVFIARRNGLKKYSNK.

A DNA-binding region (H-T-H motif) is located at residues Ser-11 to Ile-30. One can recognise a Resolvase/invertase-type recombinase catalytic domain in the interval Leu-61–Lys-190. Residues Val-66–Thr-92 adopt a coiled-coil conformation. The active-site O-(5'-phospho-DNA)-serine intermediate is the Ser-69.

It belongs to the site-specific recombinase resolvase family.

Functionally, resolvase catalyzes the resolution (a site-specific recombination) of the cointegrated replicon to yield the final transposition products. The protein is Putative resolvase R771 of Acanthamoeba polyphaga (Amoeba).